The chain runs to 283 residues: Tetraspanin-33 (283 aa).

Topologically, residues 1–24 (MARRPRAPAASGEEFSFVSPLVKY) are cytoplasmic. Residues 25–45 (LLFFFNMLFWVISMVMVAVGV) traverse the membrane as a helical segment. The Extracellular portion of the chain corresponds to 46 to 64 (YARLMKHAEAALACLAVDP). The helical transmembrane segment at 65-85 (AILLIVVGVLMFLLTFCGCIG) threads the bilayer. Residues 86–96 (SLRENICLLQT) are Cytoplasmic-facing. A helical transmembrane segment spans residues 97–117 (FSLCLTAVFLLQLAAGILGFV). Residues 118 to 235 (FSDKARGKVS…DKLVNWIHSN (118 aa)) lie on the Extracellular side of the membrane. 4 cysteine pairs are disulfide-bonded: C156–C224, C157–C189, C173–C183, and C190–C203. A glycan (N-linked (GlcNAc...) asparagine) is linked at N172. A helical membrane pass occupies residues 236 to 256 (LFLLGGVALGLAIPQLVGILL). Residues 257–283 (SQILVNQIKDQIKLQLYNQQHRADPWY) lie on the Cytoplasmic side of the membrane.

It belongs to the tetraspanin (TM4SF) family. Homodimer; disulfide-linked. Interacts (via extracellular domain) with ADAM10 (via extracellular domain). Interacts (via cytoplasmic domain) with PLEKHA7 (via WW domains); the interaction is dependent on PDZD11 being bound to PLEKHA7 and facilitates the docking of ADAM10 to zonula adherens. In terms of tissue distribution, predominantly expressed in erythroblasts.

It localises to the cell membrane. The protein resides in the cell junction. It is found in the adherens junction. The protein localises to the cytoplasm. Part of TspanC8 subgroup, composed of 6 members that interact with the transmembrane metalloprotease ADAM10. This interaction is required for ADAM10 exit from the endoplasmic reticulum and for enzymatic maturation and trafficking to the cell surface as well as substrate specificity. Different TspanC8/ADAM10 complexes have distinct substrates. Plays an important role in normal erythropoiesis. It has a role in the differentiation of erythroid progenitors. Negatively regulates ligand-induced Notch activity probably by regulating ADAM10 activity. Mediates docking of ADAM10 to zonula adherens by interacting with ADAM10 and, in a PDZD11-dependent manner, with the zonula adherens protein PLEKHA7. This chain is Tetraspanin-33, found in Homo sapiens (Human).